We begin with the raw amino-acid sequence, 470 residues long: Uronate isomerase (470 aa).

Belongs to the metallo-dependent hydrolases superfamily. Uronate isomerase family.

It catalyses the reaction D-glucuronate = D-fructuronate. The catalysed reaction is aldehydo-D-galacturonate = keto-D-tagaturonate. It participates in carbohydrate metabolism; pentose and glucuronate interconversion. The polypeptide is Uronate isomerase (Vibrio parahaemolyticus serotype O3:K6 (strain RIMD 2210633)).